Consider the following 563-residue polypeptide: Serine/threonine-protein kinase WNK8 (563 aa).

The region spanning 29-286 (IRYDDVLGRG…ALELSKDPFL (258 aa)) is the Protein kinase domain. Residues 109 to 112 (TELF) and Lys159 contribute to the ATP site. Catalysis depends on Asp176, which acts as the Proton acceptor. Positions 426–436 (TSSHHNQNSPR) are enriched in polar residues. Residues 426 to 459 (TSSHHNQNSPRLTHEDHEAANQQTVNSKDEEAAG) are disordered. Ser509 bears the Phosphoserine mark.

It belongs to the protein kinase superfamily. Ser/Thr protein kinase family. WNK subfamily. As to quaternary structure, interacts with RGS1 and GB1, but not with GPA1. The association with RGS1 at the plasma membrane is triggered by induction of glucose. Binds to EDM2 in nucleus. In terms of processing, autophosphorylated.

It is found in the nucleus. It carries out the reaction L-seryl-[protein] + ATP = O-phospho-L-seryl-[protein] + ADP + H(+). The enzyme catalyses L-threonyl-[protein] + ATP = O-phospho-L-threonyl-[protein] + ADP + H(+). Functionally, regulates flowering time by modulating the photoperiod pathway. Phosphorylates the vacuolar ATPase subunit C (VATC) and RGS1. Regulates EDM2 that, in turn, modulates development processes. This Arabidopsis thaliana (Mouse-ear cress) protein is Serine/threonine-protein kinase WNK8 (WNK8).